A 389-amino-acid polypeptide reads, in one-letter code: 8-amino-7-oxononanoate synthase (389 aa).

Arginine 23 is a substrate binding site. Residue 114-115 (GY) participates in pyridoxal 5'-phosphate binding. Histidine 139 serves as a coordination point for substrate. Pyridoxal 5'-phosphate contacts are provided by serine 185, histidine 213, and threonine 242. Lysine 245 carries the N6-(pyridoxal phosphate)lysine modification. Threonine 357 is a substrate binding site.

It belongs to the class-II pyridoxal-phosphate-dependent aminotransferase family. BioF subfamily. In terms of assembly, homodimer. Requires pyridoxal 5'-phosphate as cofactor.

The enzyme catalyses 6-carboxyhexanoyl-[ACP] + L-alanine + H(+) = (8S)-8-amino-7-oxononanoate + holo-[ACP] + CO2. Its pathway is cofactor biosynthesis; biotin biosynthesis. Its function is as follows. Catalyzes the decarboxylative condensation of pimeloyl-[acyl-carrier protein] and L-alanine to produce 8-amino-7-oxononanoate (AON), [acyl-carrier protein], and carbon dioxide. The protein is 8-amino-7-oxononanoate synthase of Acidithiobacillus ferrooxidans (strain ATCC 23270 / DSM 14882 / CIP 104768 / NCIMB 8455) (Ferrobacillus ferrooxidans (strain ATCC 23270)).